Consider the following 486-residue polypeptide: Transcription factor bHLH49 (486 aa).

Residues Met1–Asp17 are compositionally biased toward basic and acidic residues. 2 disordered regions span residues Met1–Arg30 and Lys194–Tyr300. Composition is skewed to polar residues over residues Val198–Ser221 and Gln243–Ser254. Residues Gln273 to Ser293 are compositionally biased toward low complexity. In terms of domain architecture, bHLH spans Gln309–Leu359.

As to quaternary structure, homodimer. Interacts with IBH1. Expressed constitutively in roots, stems, and flowers.

The protein localises to the nucleus. Transcriptional activator involved in cell elongation. Regulates the expression of a subset of genes involved in cell expansion by binding to the G-box motif. The polypeptide is Transcription factor bHLH49 (BHLH49) (Arabidopsis thaliana (Mouse-ear cress)).